The following is a 112-amino-acid chain: Larval cuticle protein 4 (112 aa).

Positions 1–16 are cleaved as a signal peptide; the sequence is MFKILLVCALVALVAA. Positions 31 to 92 constitute a Chitin-binding type R&amp;R domain; that stretch reads ADGFVSKLVL…PQSDLLPTPP (62 aa).

Component of the larval cuticle. This is Larval cuticle protein 4 (Lcp4) from Drosophila melanogaster (Fruit fly).